The primary structure comprises 115 residues: Large ribosomal subunit protein bL19 (115 aa).

It belongs to the bacterial ribosomal protein bL19 family.

This protein is located at the 30S-50S ribosomal subunit interface and may play a role in the structure and function of the aminoacyl-tRNA binding site. In Lacticaseibacillus casei (strain BL23) (Lactobacillus casei), this protein is Large ribosomal subunit protein bL19.